A 234-amino-acid polypeptide reads, in one-letter code: Phosphatidylinositol phosphate synthase (234 aa).

The next 2 helical transmembrane spans lie at 28 to 48 (LTPD…ALVL) and 54 to 70 (LFPG…FDML). Residue 31-34 (DAVT) coordinates a CDP-1,2-diacyl-sn-glycerol. Positions 68 and 71 each coordinate Mg(2+). 3 residues coordinate a CDP-1,2-diacyl-sn-glycerol: Gly72, Arg76, and Thr82. Residues Asp89 and Asp93 each coordinate Mg(2+). Transmembrane regions (helical) follow at residues 91 to 110 (ACDR…WVAF), 116 to 134 (LLVV…ISYI), 155 to 173 (RLII…FIAW), and 179 to 197 (VAMW…QRLY). The active-site Proton acceptor is the Asp93. The disordered stretch occupies residues 211 to 234 (PSAPVRDDDAQGHPRSGDPGKTQR). Basic and acidic residues predominate over residues 215 to 228 (VRDDDAQGHPRSGD).

The protein belongs to the CDP-alcohol phosphatidyltransferase class-I family. As to quaternary structure, homodimer. It depends on Mg(2+) as a cofactor.

The protein localises to the cell membrane. The catalysed reaction is a CDP-1,2-diacyl-sn-glycerol + 1D-myo-inositol 3-phosphate = a 1,2-diacyl-sn-glycero-3-phospho-(1D-myo-inositol-3-phosphate) + CMP + H(+). It carries out the reaction 1,2-di-(9Z-octadecenoyl)-sn-glycero-3-cytidine-5'-diphosphate + 1D-myo-inositol 3-phosphate = 1,2-di-(9Z-octadecenoyl)-sn-glycero-3-phospho-(1D-myo-inositol-3-phosphate) + CMP + H(+). It functions in the pathway phospholipid metabolism; phosphatidylinositol phosphate biosynthesis. Its function is as follows. Catalyzes the conjugation of the 1'-hydroxyl group of D-myo-inositol-3-phosphate (also named L-myo-inositol-1-phosphate) with a lipid tail of cytidine diphosphate diacylglycerol (CDP-DAG), forming phosphatidylinositol phosphate (PIP) and CMP. PIP is a precursor of phosphatidylinositol (PI) which is an essential lipid for mycobacteria required for formation of their cell wall. This is Phosphatidylinositol phosphate synthase from Mycobacterium marinum (strain ATCC BAA-535 / M).